Reading from the N-terminus, the 509-residue chain is MSVSALSSTRFTGSISGFLQVASVLGLLLLLVKAVQFYLQRQWLLKAFQQFPSPPFHWFFGHKQFQGDKELQQIMTCVENFPSAFPRWFWGSKAYLIVYDPDYMKVILGRSDPKANGVYRLLAPWIGYGLLLLNGQPWFQHRRMLTPAFHYDILKPYVKNMADSIRLMLDKWEQLAGQDSSIEIFQHISLMTLDTVMKCAFSHNGSVQVDGNYKSYIQAIGNLNDLFHSRVRNIFHQNDTIYNFSSNGHLFNRACQLAHDHTDGVIKLRKDQLQNAGELEKVKKKRRLDFLDILLLARMENGDSLSDKDLRAEVDTFMFEGHDTTASGVSWIFYALATHPEHQQRCREEVQSVLGDGSSITWDHLDQIPYTTMCIKEALRLYPPVPGIVRELSTSVTFPDGRSLPKGIQVTLSIYGLHHNPKVWPNPEVFDPSRFAPDSPRHSHSFLPFSGGARNCIGKQFAMSEMKVIVALTLLRFELLPDPTKVPIPLPRLVLKSKNGIYLYLKKLH.

Transmembrane regions (helical) follow at residues Phe-11–Leu-31 and Leu-121–His-141. Glu-320 provides a ligand contact to heme. Residue Ser-439 is modified to Phosphoserine. Cys-456 contributes to the heme binding site.

The protein belongs to the cytochrome P450 family. Requires heme as cofactor. Expressed in liver (at protein level) and kidney (at protein level).

The protein resides in the endoplasmic reticulum membrane. Its subcellular location is the microsome membrane. The enzyme catalyses an omega-methyl-long-chain fatty acid + reduced [NADPH--hemoprotein reductase] + O2 = an omega-hydroxy-long-chain fatty acid + oxidized [NADPH--hemoprotein reductase] + H2O + H(+). It catalyses the reaction dodecanoate + reduced [NADPH--hemoprotein reductase] + O2 = 12-hydroxydodecanoate + oxidized [NADPH--hemoprotein reductase] + H2O + H(+). It carries out the reaction dodecanoate + reduced [NADPH--hemoprotein reductase] + O2 = 11-hydroxydodecanoate + oxidized [NADPH--hemoprotein reductase] + H2O + H(+). The catalysed reaction is tetradecanoate + reduced [NADPH--hemoprotein reductase] + O2 = 14-hydroxytetradecanoate + oxidized [NADPH--hemoprotein reductase] + H2O + H(+). The enzyme catalyses hexadecanoate + reduced [NADPH--hemoprotein reductase] + O2 = 16-hydroxyhexadecanoate + oxidized [NADPH--hemoprotein reductase] + H2O + H(+). It catalyses the reaction (9Z)-octadecenoate + reduced [NADPH--hemoprotein reductase] + O2 = 18-hydroxy-(9Z)-octadecenoate + oxidized [NADPH--hemoprotein reductase] + H2O + H(+). It carries out the reaction (9Z,12Z)-octadecadienoate + reduced [NADPH--hemoprotein reductase] + O2 = 18-hydroxy-(9Z,12Z)-octadecadienoate + oxidized [NADPH--hemoprotein reductase] + H2O + H(+). The catalysed reaction is (9Z,12Z)-octadecadienoate + reduced [NADPH--hemoprotein reductase] + O2 = 17-hydroxy-(9Z,12Z)-octadecadienoate + oxidized [NADPH--hemoprotein reductase] + H2O + H(+). The enzyme catalyses (5Z,8Z,11Z,14Z)-eicosatetraenoate + reduced [NADPH--hemoprotein reductase] + O2 = 20-hydroxy-(5Z,8Z,11Z,14Z)-eicosatetraenoate + oxidized [NADPH--hemoprotein reductase] + H2O + H(+). It catalyses the reaction 8,9-epoxy-(5Z,11Z,14Z)-eicosatrienoate + reduced [NADPH--hemoprotein reductase] + O2 = 20-hydroxy-8,9-epoxy-(5Z,11Z,14Z)-eicosatrienoate + oxidized [NADPH--hemoprotein reductase] + H2O + H(+). Its function is as follows. A cytochrome P450 monooxygenase involved in the metabolism of fatty acids. Catalyzes predominantly the oxidation of the terminal carbon (omega-oxidation) of long-chain fatty acids. Acts as a major omega-hydroxylase for dodecanoic (lauric) acid in liver. In kidney, may play an important role in omega-hydroxylation of (5Z,8Z,11Z,14Z)-eicosatetraenoic acid (arachidonate) to 20-hydroxyeicosatetraenoic acid (20-HETE), a signaling molecule acting both as vasoconstrictive and natriuretic with overall effect on arterial blood pressure. Also participates in the formation of anti-inflammatory hydroxyepoxyeicosatrienoic acids (HEETs) in kidney by converting 8,9-epoxyeicosatrienoic acid (EET) to 20,8,9-HEET, an activator of PPARA. Displays substantially lower fatty acid omega-1 hydroxylase activity. Mechanistically, uses molecular oxygen inserting one oxygen atom into a substrate, and reducing the second into a water molecule, with two electrons provided by NADPH via cytochrome P450 reductase (CPR; NADPH-ferrihemoprotein reductase). The chain is Cytochrome P450 4A10 (Cyp4a10) from Rattus norvegicus (Rat).